The following is a 200-amino-acid chain: Chromophore lyase CpcT/CpeT 2 (200 aa).

This sequence belongs to the CpcT/CpeT biliprotein lyase family.

Its function is as follows. Covalently attaches a chromophore to Cys residue(s) of phycobiliproteins. The sequence is that of Chromophore lyase CpcT/CpeT 2 from Microcystis aeruginosa (strain NIES-843 / IAM M-2473).